Consider the following 425-residue polypeptide: Histidine--tRNA ligase (425 aa).

This sequence belongs to the class-II aminoacyl-tRNA synthetase family. Homodimer.

It is found in the cytoplasm. It carries out the reaction tRNA(His) + L-histidine + ATP = L-histidyl-tRNA(His) + AMP + diphosphate + H(+). The sequence is that of Histidine--tRNA ligase from Listeria monocytogenes serotype 4b (strain F2365).